Consider the following 1020-residue polypeptide: Tetrathionate reductase subunit A (1020 aa).

Positions 1–33 (MANLTRRQWLKVGLAVGGMVTFGLSYRDVAKRA) form a signal peptide, tat-type signal. The 84-residue stretch at 71-154 (QTIAMTQCFG…TLLESLYSPL (84 aa)) folds into the 4Fe-4S Mo/W bis-MGD-type domain. Residues Cys-78, Cys-81, Cys-85, and Cys-140 each coordinate [4Fe-4S] cluster.

The protein belongs to the prokaryotic molybdopterin-containing oxidoreductase family. Probably composed of three subunits: TtrA, TtrB and TtrC. It depends on [4Fe-4S] cluster as a cofactor. Mo-bis(molybdopterin guanine dinucleotide) is required as a cofactor. In terms of processing, predicted to be exported by the Tat system. The position of the signal peptide cleavage has not been experimentally proven.

It localises to the periplasm. Its subcellular location is the cell inner membrane. Functionally, part of a membrane-bound tetrathionate reductase that catalyzes the reduction of tetrathionate to thiosulfate. TtrA is the catalytic subunit. During mice infection, the ability to use tetrathionate as an electron acceptor is a growth advantage for S.typhimurium over the competing microbiota in the lumen of the inflamed gut. The protein is Tetrathionate reductase subunit A (ttrA) of Salmonella typhimurium (strain LT2 / SGSC1412 / ATCC 700720).